The primary structure comprises 308 residues: tRNA uridine(34) hydroxylase (308 aa).

In terms of domain architecture, Rhodanese spans 129–223 (QEKDVLILDA…YGKHPETQGV (95 aa)). Cysteine 183 (cysteine persulfide intermediate) is an active-site residue.

Belongs to the TrhO family.

It carries out the reaction uridine(34) in tRNA + AH2 + O2 = 5-hydroxyuridine(34) in tRNA + A + H2O. In terms of biological role, catalyzes oxygen-dependent 5-hydroxyuridine (ho5U) modification at position 34 in tRNAs. The protein is tRNA uridine(34) hydroxylase of Aster yellows witches'-broom phytoplasma (strain AYWB).